The primary structure comprises 370 residues: Flagellar P-ring protein 1 (370 aa).

A signal peptide spans 1-25 (MSVLIKTRHCFVLLGLWLVLPTASA).

Belongs to the FlgI family. As to quaternary structure, the basal body constitutes a major portion of the flagellar organelle and consists of four rings (L,P,S, and M) mounted on a central rod.

It is found in the periplasm. The protein resides in the bacterial flagellum basal body. Its function is as follows. Assembles around the rod to form the L-ring and probably protects the motor/basal body from shearing forces during rotation. The sequence is that of Flagellar P-ring protein 1 from Yersinia pestis.